A 165-amino-acid polypeptide reads, in one-letter code: Glucosamine 6-phosphate N-acetyltransferase (165 aa).

The N-acetyltransferase domain occupies 22–165; the sequence is FKVRPLAKDD…DDCNFMTQRF (144 aa). Residues Thr-44, 92-95, and 104-106 each bind substrate; these read KFIH and EDV. 114-119 is an acetyl-CoA binding site; that stretch reads RQKLGA. Residues 135 to 136 and Arg-164 contribute to the substrate site; that span reads YK.

The protein belongs to the acetyltransferase family. GNA1 subfamily.

It catalyses the reaction D-glucosamine 6-phosphate + acetyl-CoA = N-acetyl-D-glucosamine 6-phosphate + CoA + H(+). It functions in the pathway nucleotide-sugar biosynthesis; UDP-N-acetyl-alpha-D-glucosamine biosynthesis; N-acetyl-alpha-D-glucosamine 1-phosphate from alpha-D-glucosamine 6-phosphate (route I): step 1/2. The protein is Glucosamine 6-phosphate N-acetyltransferase (gna-1) of Caenorhabditis elegans.